We begin with the raw amino-acid sequence, 289 residues long: BTB/POZ domain-containing protein KCTD7 (289 aa).

The span at 1–10 shows a compositional bias: polar residues; the sequence is MVVVTGQSKG. The disordered stretch occupies residues 1–35; sequence MVVVTGQSKGSGDPDEAMSSSDAEDDFQEPATPTA. In terms of domain architecture, BTB spans 51-149; sequence EVVPLNVGGM…HLEDVQPLKG (99 aa).

It localises to the cell membrane. It is found in the cytoplasm. Its subcellular location is the cytosol. Its function is as follows. May be involved in the control of excitability of cortical neurons. This Gallus gallus (Chicken) protein is BTB/POZ domain-containing protein KCTD7 (KCTD7).